The sequence spans 360 residues: Peptide chain release factor 1 (360 aa).

N5-methylglutamine is present on Gln235.

Belongs to the prokaryotic/mitochondrial release factor family. In terms of processing, methylated by PrmC. Methylation increases the termination efficiency of RF1.

Its subcellular location is the cytoplasm. Peptide chain release factor 1 directs the termination of translation in response to the peptide chain termination codons UAG and UAA. This is Peptide chain release factor 1 from Methylobacillus flagellatus (strain ATCC 51484 / DSM 6875 / VKM B-1610 / KT).